A 207-amino-acid chain; its full sequence is Dephospho-CoA kinase (207 aa).

In terms of domain architecture, DPCK spans 4–203 (VIGLTGGIAS…EEGYIEKPNY (200 aa)). 12–17 (ASGKST) lines the ATP pocket.

The protein belongs to the CoaE family.

The protein resides in the cytoplasm. It catalyses the reaction 3'-dephospho-CoA + ATP = ADP + CoA + H(+). Its pathway is cofactor biosynthesis; coenzyme A biosynthesis; CoA from (R)-pantothenate: step 5/5. In terms of biological role, catalyzes the phosphorylation of the 3'-hydroxyl group of dephosphocoenzyme A to form coenzyme A. The sequence is that of Dephospho-CoA kinase from Staphylococcus aureus (strain USA300).